The primary structure comprises 473 residues: MKTLYSLRRFYHVETLFNGNLAVSGRDQETTGFAWWAGNARLINLSGKLLGAHVAHAGLIVFWAGAMNLFEVAHFVPEKPMYEQGLILLPHLATLGWGIGPGGEVVDTFPYFVSGVLHLISSAVLGFGGVYHALIGPETLEESFPFFGYVWKDKNKMTTILGIHLIILGLGAFLLVFKAVWFGGVYDTWAPGGGDVRKITNLTLNPGVIFGYLLKSPFGGEGWIVSVDNMEDIIGGHVWLGAICIFGGIWHILTKPFAWARRAFIWSGEAYLSYSLAAISMMGFIACCFVWFNNTAYPSEFYGPTGPEASQAQAFTFLVRDQRLGANVGSAQGPTGLGKYLMRSPTGEIIFGGETMRFWDLRAPWLEPLRGPNGLDLAKLKKDIQPWQERRSAEYMTHAPLGSLNSVGGVATEINAVNYVSPRSWLSTSHFVLGFFFFIAHLWHAGRARAAAAGFEKGIDRETEPVFFMNPLN.

The propeptide occupies 1–14 (MKTLYSLRRFYHVE). The residue at position 15 (Thr-15) is an N-acetylthreonine. A Phosphothreonine modification is found at Thr-15. A run of 5 helical transmembrane segments spans residues 69–93 (LFEVAHFVPEKPMYEQGLILLPHLA), 134–155 (LIGPETLEESFPFFGYVWKDKN), 178–200 (KAVWFGGVYDTWAPGGGDVRKIT), 255–275 (KPFAWARRAFIWSGEAYLSYS), and 291–312 (WFNNTAYPSEFYGPTGPEASQA). Glu-367 is a binding site for [CaMn4O5] cluster. Residues 447–471 (RARAAAAGFEKGIDRETEPVFFMNP) form a helical membrane-spanning segment.

Belongs to the PsbB/PsbC family. PsbC subfamily. As to quaternary structure, PSII is composed of 1 copy each of membrane proteins PsbA, PsbB, PsbC, PsbD, PsbE, PsbF, PsbH, PsbI, PsbJ, PsbK, PsbL, PsbM, PsbT, PsbX, PsbY, PsbZ, Psb30/Ycf12, at least 3 peripheral proteins of the oxygen-evolving complex and a large number of cofactors. It forms dimeric complexes. The cofactor is Binds multiple chlorophylls and provides some of the ligands for the Ca-4Mn-5O cluster of the oxygen-evolving complex. It may also provide a ligand for a Cl- that is required for oxygen evolution. PSII binds additional chlorophylls, carotenoids and specific lipids..

The protein resides in the plastid. Its subcellular location is the chloroplast thylakoid membrane. In terms of biological role, one of the components of the core complex of photosystem II (PSII). It binds chlorophyll and helps catalyze the primary light-induced photochemical processes of PSII. PSII is a light-driven water:plastoquinone oxidoreductase, using light energy to abstract electrons from H(2)O, generating O(2) and a proton gradient subsequently used for ATP formation. In Staurastrum punctulatum (Green alga), this protein is Photosystem II CP43 reaction center protein.